Here is a 153-residue protein sequence, read N- to C-terminus: MTERKGMEEINREEFQEVVVNIGRVTKVVKGGRRFRFNALVVVGNKNGLVGFGLGKAKEVPDAIKKAVDDAFKNLIHVTIKGTTIAHDIEHKYNASRILLKPASEGTGVIAGGSTRPIVELAGIKDILTKSLGSNNPYNVVRATFDALAKIKA.

An S5 DRBM domain is found at 15–78; that stretch reads FQEVVVNIGR…DDAFKNLIHV (64 aa).

This sequence belongs to the universal ribosomal protein uS5 family. As to quaternary structure, part of the 30S ribosomal subunit. Contacts proteins S4 and S8.

With S4 and S12 plays an important role in translational accuracy. Its function is as follows. Located at the back of the 30S subunit body where it stabilizes the conformation of the head with respect to the body. In Helicobacter pylori (strain P12), this protein is Small ribosomal subunit protein uS5.